The following is a 327-amino-acid chain: Phenylalanine--tRNA ligase alpha subunit (327 aa).

A Mg(2+)-binding site is contributed by Glu-252.

It belongs to the class-II aminoacyl-tRNA synthetase family. Phe-tRNA synthetase alpha subunit type 1 subfamily. In terms of assembly, tetramer of two alpha and two beta subunits. The cofactor is Mg(2+).

The protein localises to the cytoplasm. The enzyme catalyses tRNA(Phe) + L-phenylalanine + ATP = L-phenylalanyl-tRNA(Phe) + AMP + diphosphate + H(+). The polypeptide is Phenylalanine--tRNA ligase alpha subunit (Shewanella sp. (strain MR-7)).